The sequence spans 944 residues: Proline and serine-rich protein 1 (944 aa).

Position 1 is an N-acetylmethionine (Met-1). Disordered regions lie at residues 233–285 (PPPY…PVPT), 369–396 (PGPSATPTAATPTPGPTPRSTLGSSEAF), 608–633 (KTEPTSPTPSAFKGPSHSGNPSHGTL), and 912–944 (ESYPAQPDGFPSYPSAPGTPFSLQPSLSQSGWQ). The segment covering 248–274 (LSNPSKPIQNQTFSTPASQLFSPHGSN) has biased composition (polar residues). Over residues 275 to 285 (PSTPAATPVPT) the composition is skewed to low complexity. Positions 932 to 944 (FSLQPSLSQSGWQ) are enriched in polar residues.

In terms of assembly, interacts with TET2 and OGT; this interaction mediates TET2 O-GlcNAcylation and stability by promoting the interaction between OGT and TET2. Interacts with KDM6A. Interacts with TET1. In terms of processing, glycosylated. Interaction with OGT leads to GlcNAcylation.

Mediates OGT interaction with and O-GlcNAcylation of TET2 to control TET2 stabilization at enhancers and CpG islands (CGIs). This is Proline and serine-rich protein 1 from Homo sapiens (Human).